The primary structure comprises 190 residues: dCTP deaminase (190 aa).

107–112 (KSTYAR) lines the dCTP pocket. Residue Glu133 is the Proton donor/acceptor of the active site. The dCTP site is built by Gln152, Tyr166, and Gln176.

This sequence belongs to the dCTP deaminase family. As to quaternary structure, homotrimer.

It carries out the reaction dCTP + H2O + H(+) = dUTP + NH4(+). The protein operates within pyrimidine metabolism; dUMP biosynthesis; dUMP from dCTP (dUTP route): step 1/2. In terms of biological role, catalyzes the deamination of dCTP to dUTP. The sequence is that of dCTP deaminase from Campylobacter hominis (strain ATCC BAA-381 / DSM 21671 / CCUG 45161 / LMG 19568 / NCTC 13146 / CH001A).